A 343-amino-acid polypeptide reads, in one-letter code: MIELSNITKVFQQNGRSITALADVSLHVPTGQIYGVIGASGAGKSTLIRCVNLLERPTEGKVLVDGQELTQLSDSQLTRARRQIGMIFQHFNLLSSRTVFGNISLPLELDNTPKADITKRVNELLELVGLADKHDVYPANLSGGQKQRVAIARALASNPKVLLCDEATSALDPATTRSILELLKDINRRLGLTILLITHEMDVVKRICDQVAVISDGRLIEKDTVSEVFSHPKTPLAQKFIQSTLHLDIPDDYLTRLSPDYHPDTTPLLRMEFTGKSVDAPLLSEVARRFNVNNNIISAQMDYAGGVKFGIMLAEMHGNNADIKDAIQFLQESHVTIEVLGYV.

Positions isoleucine 2–isoleucine 241 constitute an ABC transporter domain. Glycine 38–serine 45 is an ATP binding site.

The protein belongs to the ABC transporter superfamily. Methionine importer (TC 3.A.1.24) family. The complex is composed of two ATP-binding proteins (MetN), two transmembrane proteins (MetI) and a solute-binding protein (MetQ).

The protein localises to the cell inner membrane. It catalyses the reaction L-methionine(out) + ATP + H2O = L-methionine(in) + ADP + phosphate + H(+). It carries out the reaction D-methionine(out) + ATP + H2O = D-methionine(in) + ADP + phosphate + H(+). In terms of biological role, part of the ABC transporter complex MetNIQ involved in methionine import. Responsible for energy coupling to the transport system. This is Methionine import ATP-binding protein MetN 3 from Pectobacterium atrosepticum (strain SCRI 1043 / ATCC BAA-672) (Erwinia carotovora subsp. atroseptica).